The following is a 134-amino-acid chain: uncharacterized protein (134 aa).

3 helical membrane-spanning segments follow: residues 26–46 (VAVFLVRAVILLIFAAFGNIG), 55–75 (LLKFSIINIIMLLFGIAQIIV), and 101–121 (YAPMILLLAVNLCGAVFGLIL).

It localises to the membrane. This is an uncharacterized protein from Dictyostelium discoideum (Social amoeba).